The following is a 191-amino-acid chain: Flavin prenyltransferase UbiX (191 aa).

FMN-binding positions include 13–15 (GAS), T39, 90–93 (TMKT), and R125. Dimethylallyl phosphate contacts are provided by Y155 and K171.

It belongs to the UbiX/PAD1 family.

The enzyme catalyses dimethylallyl phosphate + FMNH2 = prenylated FMNH2 + phosphate. In terms of biological role, flavin prenyltransferase that catalyzes the synthesis of the prenylated FMN cofactor (prenyl-FMN) for 4-hydroxy-3-polyprenylbenzoic acid decarboxylase UbiD. The prenyltransferase is metal-independent and links a dimethylallyl moiety from dimethylallyl monophosphate (DMAP) to the flavin N5 and C6 atoms of FMN. This chain is Flavin prenyltransferase UbiX, found in Methanothermobacter thermautotrophicus (strain ATCC 29096 / DSM 1053 / JCM 10044 / NBRC 100330 / Delta H) (Methanobacterium thermoautotrophicum).